Consider the following 353-residue polypeptide: MTAILERRESTSLWGRFCNWVTSTENRLYIGWFGVLMIPTLLTATSVFIIAFIAAPPVDIDGIREPVSGSLLYGNNIISGAIIPTSAAIGLHFYPIWEAASVDEWLYNGGPYELIVLHFLLGVRCYMGREWELSFRLGMRPWIAVAYSAPVAAATAVFLIYPIGQGSFSDGMPLGISGTFNFMIVFQAEHNILMHPFHMLGVAGVFGGSLFSAMHGSLVTSSLIRETTENESANEGYRFGQEEETYNIVAAHGYFGRLIFQYASFNNSRSLHFFLAAWPVIGIWFTSLGISTMAFNLNGFNFNQSVVDSQGRVINTWADIINRANLGMEVMHERNAHNFPLDLAAVEAPSTIG.

Thr2 is modified (N-acetylthreonine). A Phosphothreonine modification is found at Thr2. The next 3 helical transmembrane spans lie at 29-46, 118-133, and 142-156; these read YIGW…TATS, HFLL…EWEL, and WIAV…AATA. A chlorophyll a-binding site is contributed by His118. Tyr126 lines the pheophytin a pocket. [CaMn4O5] cluster is bound by residues Asp170 and Glu189. Residues 197–218 traverse the membrane as a helical segment; the sequence is FHMLGVAGVFGGSLFSAMHGSL. His198 lines the chlorophyll a pocket. A quinone-binding positions include His215 and 264 to 265; that span reads SF. His215 is a Fe cation binding site. His272 contacts Fe cation. A helical transmembrane segment spans residues 274 to 288; sequence FLAAWPVIGIWFTSL. [CaMn4O5] cluster contacts are provided by His332, Glu333, Asp342, and Ala344. Positions 345–353 are excised as a propeptide; that stretch reads AVEAPSTIG.

It belongs to the reaction center PufL/M/PsbA/D family. As to quaternary structure, PSII is composed of 1 copy each of membrane proteins PsbA, PsbB, PsbC, PsbD, PsbE, PsbF, PsbH, PsbI, PsbJ, PsbK, PsbL, PsbM, PsbT, PsbX, PsbY, PsbZ, Psb30/Ycf12, at least 3 peripheral proteins of the oxygen-evolving complex and a large number of cofactors. It forms dimeric complexes. The cofactor is The D1/D2 heterodimer binds P680, chlorophylls that are the primary electron donor of PSII, and subsequent electron acceptors. It shares a non-heme iron and each subunit binds pheophytin, quinone, additional chlorophylls, carotenoids and lipids. D1 provides most of the ligands for the Mn4-Ca-O5 cluster of the oxygen-evolving complex (OEC). There is also a Cl(-1) ion associated with D1 and D2, which is required for oxygen evolution. The PSII complex binds additional chlorophylls, carotenoids and specific lipids.. In terms of processing, tyr-161 forms a radical intermediate that is referred to as redox-active TyrZ, YZ or Y-Z. C-terminally processed by CTPA; processing is essential to allow assembly of the oxygen-evolving complex and thus photosynthetic growth.

It localises to the plastid. Its subcellular location is the chloroplast thylakoid membrane. It catalyses the reaction 2 a plastoquinone + 4 hnu + 2 H2O = 2 a plastoquinol + O2. Functionally, photosystem II (PSII) is a light-driven water:plastoquinone oxidoreductase that uses light energy to abstract electrons from H(2)O, generating O(2) and a proton gradient subsequently used for ATP formation. It consists of a core antenna complex that captures photons, and an electron transfer chain that converts photonic excitation into a charge separation. The D1/D2 (PsbA/PsbD) reaction center heterodimer binds P680, the primary electron donor of PSII as well as several subsequent electron acceptors. The chain is Photosystem II protein D1 from Landoltia punctata (Dotted duckmeat).